We begin with the raw amino-acid sequence, 281 residues long: GPN-loop GTPase 3 (281 aa).

A GTP-binding site is contributed by 13–18; sequence GSGKST. The Gly-Pro-Asn (GPN)-loop; involved in dimer interface signature appears at 70-72; that stretch reads GPN. 173–176 contacts GTP; that stretch reads SKMD. The disordered stretch occupies residues 259–281; it reads VQYGEDEEPKEPKDMDEGDFTAQ.

Belongs to the GPN-loop GTPase family. Heterodimers with GPN1 or GPN2. Binds to RNA polymerase II (RNAPII).

Functionally, small GTPase required for proper nuclear import of RNA polymerase II and III (RNAPII and RNAPIII). May act at an RNAP assembly step prior to nuclear import. This is GPN-loop GTPase 3 from Mycosarcoma maydis (Corn smut fungus).